The chain runs to 187 residues: Ribosome-recycling factor (187 aa).

This sequence belongs to the RRF family.

It is found in the cytoplasm. In terms of biological role, responsible for the release of ribosomes from messenger RNA at the termination of protein biosynthesis. May increase the efficiency of translation by recycling ribosomes from one round of translation to another. In Rhodopseudomonas palustris (strain HaA2), this protein is Ribosome-recycling factor.